We begin with the raw amino-acid sequence, 246 residues long: Probable transcriptional regulatory protein BVU_3469 (246 aa).

This sequence belongs to the TACO1 family.

The protein resides in the cytoplasm. In Phocaeicola vulgatus (strain ATCC 8482 / DSM 1447 / JCM 5826 / CCUG 4940 / NBRC 14291 / NCTC 11154) (Bacteroides vulgatus), this protein is Probable transcriptional regulatory protein BVU_3469.